We begin with the raw amino-acid sequence, 276 residues long: Phosphate import ATP-binding protein PstB 2 (276 aa).

The ABC transporter domain occupies 22–262 (MAAVNLTLGF…PKHAETARYV (241 aa)). ATP is bound at residue 54–61 (GPTGSGKT).

It belongs to the ABC transporter superfamily. Phosphate importer (TC 3.A.1.7) family. As to quaternary structure, the complex is composed of two ATP-binding proteins (PstB), two transmembrane proteins (PstC and PstA) and a solute-binding protein (PstS).

It is found in the cell membrane. It catalyses the reaction phosphate(out) + ATP + H2O = ADP + 2 phosphate(in) + H(+). Its function is as follows. Part of the ABC transporter complex PstSACB involved in phosphate import. Responsible for energy coupling to the transport system. The polypeptide is Phosphate import ATP-binding protein PstB 2 (Mycobacterium bovis (strain ATCC BAA-935 / AF2122/97)).